We begin with the raw amino-acid sequence, 186 residues long: Spermidine N(1)-acetyltransferase (186 aa).

The N-acetyltransferase domain maps to 7–167 (VKLRPLERED…NAIRMCIFQH (161 aa)). Residues methionine 30, glutamate 35, glutamate 43, and 51–54 (HIHD) contribute to the spermine site. Glutamate 35 serves as a coordination point for Mg(2+). Spermidine is bound by residues glutamate 35 and glutamate 43. Residue glutamate 76 participates in Mg(2+) binding. Residue 85-87 (EFQ) participates in spermine binding. Acetyl-CoA is bound by residues 88–90 (III), 95–101 (QGKGLAT), and 128–137 (NEKAIHIYRK). Tyrosine 135 acts as the Proton donor in catalysis.

It belongs to the acetyltransferase family. As to quaternary structure, homododecamer.

Its subcellular location is the cytoplasm. The catalysed reaction is an alkane-alpha,omega-diamine + acetyl-CoA = an N-acetylalkane-alpha,omega-diamine + CoA + H(+). It catalyses the reaction spermidine + acetyl-CoA = N(1)-acetylspermidine + CoA + H(+). It carries out the reaction spermidine + acetyl-CoA = N(8)-acetylspermidine + CoA + H(+). The enzyme catalyses spermine + acetyl-CoA = N(1)-acetylspermine + CoA + H(+). It participates in amine and polyamine degradation; spermidine degradation. Its pathway is amine and polyamine degradation; spermine degradation. In terms of biological role, involved in the protection against polyamine toxicity by regulating their concentration. Catalyzes the transfer of an acetyl group from acetyl coenzyme A (AcCoA) to the primary amino groups of spermidine to yield N(1)- and N(8)-acetylspermidine. It can also use spermine. The protein is Spermidine N(1)-acetyltransferase (speG) of Escherichia coli O157:H7.